The chain runs to 338 residues: Tetraacyldisaccharide 4'-kinase (338 aa).

An ATP-binding site is contributed by 51 to 58; it reads HVGGAGKT.

It belongs to the LpxK family.

The enzyme catalyses a lipid A disaccharide + ATP = a lipid IVA + ADP + H(+). It participates in glycolipid biosynthesis; lipid IV(A) biosynthesis; lipid IV(A) from (3R)-3-hydroxytetradecanoyl-[acyl-carrier-protein] and UDP-N-acetyl-alpha-D-glucosamine: step 6/6. Transfers the gamma-phosphate of ATP to the 4'-position of a tetraacyldisaccharide 1-phosphate intermediate (termed DS-1-P) to form tetraacyldisaccharide 1,4'-bis-phosphate (lipid IVA). The chain is Tetraacyldisaccharide 4'-kinase from Bradyrhizobium diazoefficiens (strain JCM 10833 / BCRC 13528 / IAM 13628 / NBRC 14792 / USDA 110).